Here is a 250-residue protein sequence, read N- to C-terminus: Aquaporin TIP2-1 (250 aa).

Met-1 is modified (N-acetylmethionine). The Cytoplasmic portion of the chain corresponds to 1-20 (MAGVAFGSFDDSFSLASLRA). An N-acetylalanine; in Aquaporin TIP2-1, N-terminally processed modification is found at Ala-2. A helical membrane pass occupies residues 21–41 (YLAEFISTLLFVFAGVGSAIA). Topologically, residues 42–54 (YAKLTSDAALDTP) are vacuolar. A helical membrane pass occupies residues 55-75 (GLVAIAVCHGFALFVAVAIGA). Over 76 to 98 (NISGGHVNPAVTFGLAVGGQITV) the chain is Cytoplasmic. An NPA 1 motif is present at residues 83–85 (NPA). The helical transmembrane segment at 99–119 (ITGVFYWIAQLLGSTAACFLL) threads the bilayer. At 120–141 (KYVTGGLAVPTHSVAAGLGSIE) the chain is on the vacuolar side. A helical membrane pass occupies residues 142-162 (GVVMEIIITFALVYTVYATAA). Residues 163–168 (DPKKGS) are Cytoplasmic-facing. Residues 169–189 (LGTIAPLAIGLIVGANILAAG) form a helical membrane-spanning segment. Over 190–215 (PFSGGSMNPARSFGPAVAAGDFSGHW) the chain is Vacuolar. An NPA 2 motif is present at residues 197-199 (NPA). Residues 216-236 (VYWVGPLIGGGLAGLIYGNVF) traverse the membrane as a helical segment. The Cytoplasmic segment spans residues 237 to 250 (MGSSEHVPLASADF).

Belongs to the MIP/aquaporin (TC 1.A.8) family. TIP (TC 1.A.8.10) subfamily. As to quaternary structure, interacts with cucumber mosaic virus (CMV) Protein 1a. As to expression, strongly expressed in shoot, rosette, bolt and flowers. Also expressed in roots, flower buds and above ground.

The protein resides in the vacuole membrane. Its function is as follows. Aquaporin required to facilitate the transport of water from the vacuolar compartment to the cytoplasm. Does not promote glycerol permeability. Its function is impaired by Hg(2+). Transports urea in yeast cells and Xenopus laevis oocytes in a pH-independent manner. Transports methylammonium or ammonium in yeast cells and Xenopus laevis oocytes, preferentially at high medium pH. May participate in vacuolar compartmentation and detoxification of ammonium. The protein is Aquaporin TIP2-1 (TIP2-1) of Arabidopsis thaliana (Mouse-ear cress).